We begin with the raw amino-acid sequence, 90 residues long: Putative beta-neurotoxin RjAa2f (90 aa).

Positions 1 to 18 (MKILIFIIASFMLIGVEC) are cleaved as a signal peptide. One can recognise an LCN-type CS-alpha/beta domain in the interval 19 to 89 (KEGYPMGSDG…VWDSKTNKCG (71 aa)). Intrachain disulfides connect Cys29/Cys88, Cys33/Cys62, Cys40/Cys69, and Cys44/Cys71.

This sequence belongs to the long (4 C-C) scorpion toxin superfamily. Sodium channel inhibitor family. Beta subfamily. As to expression, expressed by the venom gland.

It is found in the secreted. Its function is as follows. Beta toxins bind voltage-independently at site-4 of sodium channels (Nav) and shift the voltage of activation toward more negative potentials thereby affecting sodium channel activation and promoting spontaneous and repetitive firing. This Rhopalurus junceus (Caribbean blue scorpion) protein is Putative beta-neurotoxin RjAa2f.